We begin with the raw amino-acid sequence, 359 residues long: 3-dehydroquinate synthase (359 aa).

Residues 69–74, 103–107, 127–128, Lys-140, Lys-149, and 167–170 each bind NAD(+); these read DGEAHK, GVIGD, TT, and TLDT. Residues Glu-182, His-245, and His-262 each contribute to the Zn(2+) site.

The protein belongs to the sugar phosphate cyclases superfamily. Dehydroquinate synthase family. It depends on Co(2+) as a cofactor. The cofactor is Zn(2+). Requires NAD(+) as cofactor.

Its subcellular location is the cytoplasm. The enzyme catalyses 7-phospho-2-dehydro-3-deoxy-D-arabino-heptonate = 3-dehydroquinate + phosphate. It participates in metabolic intermediate biosynthesis; chorismate biosynthesis; chorismate from D-erythrose 4-phosphate and phosphoenolpyruvate: step 2/7. Functionally, catalyzes the conversion of 3-deoxy-D-arabino-heptulosonate 7-phosphate (DAHP) to dehydroquinate (DHQ). The protein is 3-dehydroquinate synthase of Methylococcus capsulatus (strain ATCC 33009 / NCIMB 11132 / Bath).